A 631-amino-acid chain; its full sequence is 1-deoxy-D-xylulose-5-phosphate synthase (631 aa).

Residues His-72 and Gly-113 to Ala-115 each bind thiamine diphosphate. Asp-144 contacts Mg(2+). Residues Gly-145 to Ala-146, Asn-174, Tyr-287, and Glu-370 contribute to the thiamine diphosphate site. Asn-174 serves as a coordination point for Mg(2+).

Belongs to the transketolase family. DXPS subfamily. Homodimer. Mg(2+) is required as a cofactor. Thiamine diphosphate serves as cofactor.

The enzyme catalyses D-glyceraldehyde 3-phosphate + pyruvate + H(+) = 1-deoxy-D-xylulose 5-phosphate + CO2. Its pathway is metabolic intermediate biosynthesis; 1-deoxy-D-xylulose 5-phosphate biosynthesis; 1-deoxy-D-xylulose 5-phosphate from D-glyceraldehyde 3-phosphate and pyruvate: step 1/1. Its function is as follows. Catalyzes the acyloin condensation reaction between C atoms 2 and 3 of pyruvate and glyceraldehyde 3-phosphate to yield 1-deoxy-D-xylulose-5-phosphate (DXP). This Prochlorococcus marinus (strain MIT 9515) protein is 1-deoxy-D-xylulose-5-phosphate synthase.